The following is an 86-amino-acid chain: uncharacterized protein (86 aa).

It to C.jejuni CJ0253.

This is an uncharacterized protein from Helicobacter pylori (strain ATCC 700392 / 26695) (Campylobacter pylori).